Consider the following 851-residue polypeptide: Beta-galactosidase BoGH2A (851 aa).

The signal sequence occupies residues 1 to 19; the sequence is MMIGKLKYLMLGGCLILGS. Cys20 carries N-palmitoyl cysteine lipidation. Cys20 is lipidated: S-diacylglycerol cysteine. Glu437 acts as the Proton donor in catalysis. Catalysis depends on Glu544, which acts as the Nucleophile.

It belongs to the glycosyl hydrolase 2 family.

The protein resides in the cell inner membrane. The catalysed reaction is Hydrolysis of terminal non-reducing beta-D-galactose residues in beta-D-galactosides.. Its pathway is glucan metabolism; xyloglucan degradation. Functionally, catalyzes the hydrolysis of terminal non-reducing beta-D-galactose residues in beta-D-galactosides in xyloglucan degradation, converting 'L' units to 'X' units. This Bacteroides ovatus (strain ATCC 8483 / DSM 1896 / JCM 5824 / BCRC 10623 / CCUG 4943 / NCTC 11153) protein is Beta-galactosidase BoGH2A.